We begin with the raw amino-acid sequence, 415 residues long: Gamma-glutamyl phosphate reductase (415 aa).

This sequence belongs to the gamma-glutamyl phosphate reductase family.

It is found in the cytoplasm. It carries out the reaction L-glutamate 5-semialdehyde + phosphate + NADP(+) = L-glutamyl 5-phosphate + NADPH + H(+). It participates in amino-acid biosynthesis; L-proline biosynthesis; L-glutamate 5-semialdehyde from L-glutamate: step 2/2. Catalyzes the NADPH-dependent reduction of L-glutamate 5-phosphate into L-glutamate 5-semialdehyde and phosphate. The product spontaneously undergoes cyclization to form 1-pyrroline-5-carboxylate. This is Gamma-glutamyl phosphate reductase from Oceanobacillus iheyensis (strain DSM 14371 / CIP 107618 / JCM 11309 / KCTC 3954 / HTE831).